We begin with the raw amino-acid sequence, 926 residues long: LPS-assembly protein LptD (926 aa).

Residues 1–22 form the signal peptide; sequence MALKSPAFRKKFPLLVTGSLLA. Residues 58 to 99 form a disordered region; that stretch reads VDLPPRPVHDTTSVSSNGTVTSQSTSSGEQVAGTQLVTEAKG. The segment covering 68–85 has biased composition (low complexity); sequence TTSVSSNGTVTSQSTSSG.

The protein belongs to the LptD family. In terms of assembly, component of the lipopolysaccharide transport and assembly complex. Interacts with LptE and LptA.

The protein resides in the cell outer membrane. Functionally, together with LptE, is involved in the assembly of lipopolysaccharide (LPS) at the surface of the outer membrane. The protein is LPS-assembly protein LptD of Pseudomonas savastanoi pv. phaseolicola (strain 1448A / Race 6) (Pseudomonas syringae pv. phaseolicola (strain 1448A / Race 6)).